A 609-amino-acid polypeptide reads, in one-letter code: Carotenoid cleavage dioxygenase 7, chloroplastic (609 aa).

Residues Met1–Arg34 constitute a chloroplast transit peptide. Fe cation is bound by residues His263, His316, His394, and His603.

It belongs to the carotenoid oxygenase family. Requires Fe(2+) as cofactor. In terms of tissue distribution, expressed in vascular bundles of roots, leaves, stems and panicles.

It localises to the plastid. It is found in the chloroplast. It carries out the reaction 9-cis-beta-carotene + O2 = 9-cis-10'-apo-beta-carotenal + beta-ionone. Functionally, involved in strigolactones biosynthesis by cleaving asymmetrically a variety of linear and cyclic carotenoids at the 9-10 double bond. Produces one C(13) beta-ionone and the C(27) 10'-apo-beta-carotenal. Strigolactones are hormones that inhibit tillering and shoot branching through the MAX-dependent pathway, contribute to the regulation of shoot architectural response to phosphate-limiting conditions and function as rhizosphere signal that stimulates hyphal branching of arbuscular mycorrhizal fungi and trigger seed germination of root parasitic weeds. Can rescue the phenotype in the Arabidopsis max3 mutant. This is Carotenoid cleavage dioxygenase 7, chloroplastic (CCD7) from Oryza sativa subsp. japonica (Rice).